Consider the following 244-residue polypeptide: Isoprenyl transferase (244 aa).

Asp-23 is a catalytic residue. Mg(2+) is bound at residue Asp-23. Residues Gly-24–Arg-27, Trp-28, Arg-36, His-40, and Ser-68–Glu-70 each bind substrate. Residue Asn-71 is the Proton acceptor of the active site. Residues Trp-72, Arg-74, Arg-191, and Arg-197 to Ser-199 each bind substrate. A Mg(2+)-binding site is contributed by Glu-210.

Belongs to the UPP synthase family. As to quaternary structure, homodimer. Mg(2+) serves as cofactor.

Functionally, catalyzes the condensation of isopentenyl diphosphate (IPP) with allylic pyrophosphates generating different type of terpenoids. The chain is Isoprenyl transferase from Lactococcus lactis subsp. lactis (strain IL1403) (Streptococcus lactis).